The primary structure comprises 491 residues: NADH-quinone oxidoreductase subunit N 1 (491 aa).

14 helical membrane passes run 15 to 35, 41 to 61, 77 to 97, 105 to 125, 130 to 150, 165 to 185, 211 to 231, 247 to 269, 279 to 299, 307 to 327, 333 to 353, 378 to 398, 416 to 436, and 459 to 479; these read VLGM…VDMF, VLLT…ALDY, FGVL…LIAF, LSQG…LFLV, LVTI…LTGF, LLLG…IYGM, PILL…VSMF, PVTA…RFLN, WQLL…IVAV, MLAY…LAAS, AFTV…AVLI, LALA…TAGF, LAII…RVIV, and LGVI…NIFT.

It belongs to the complex I subunit 2 family. NDH-1 is composed of 14 different subunits. Subunits NuoA, H, J, K, L, M, N constitute the membrane sector of the complex.

Its subcellular location is the cell membrane. The catalysed reaction is a quinone + NADH + 5 H(+)(in) = a quinol + NAD(+) + 4 H(+)(out). Functionally, NDH-1 shuttles electrons from NADH, via FMN and iron-sulfur (Fe-S) centers, to quinones in the respiratory chain. The immediate electron acceptor for the enzyme in this species is believed to be ubiquinone. Couples the redox reaction to proton translocation (for every two electrons transferred, four hydrogen ions are translocated across the cytoplasmic membrane), and thus conserves the redox energy in a proton gradient. In Herpetosiphon aurantiacus (strain ATCC 23779 / DSM 785 / 114-95), this protein is NADH-quinone oxidoreductase subunit N 1.